Consider the following 247-residue polypeptide: 2,3-bisphosphoglycerate-dependent phosphoglycerate mutase (247 aa).

Residues 8–15 (RHGESQWN), 21–22 (TG), Arg-60, 87–90 (ERHY), Lys-98, 114–115 (RR), and 183–184 (GN) each bind substrate. His-9 serves as the catalytic Tele-phosphohistidine intermediate. Glu-87 serves as the catalytic Proton donor/acceptor.

This sequence belongs to the phosphoglycerate mutase family. BPG-dependent PGAM subfamily.

The catalysed reaction is (2R)-2-phosphoglycerate = (2R)-3-phosphoglycerate. Its pathway is carbohydrate degradation; glycolysis; pyruvate from D-glyceraldehyde 3-phosphate: step 3/5. Catalyzes the interconversion of 2-phosphoglycerate and 3-phosphoglycerate. The chain is 2,3-bisphosphoglycerate-dependent phosphoglycerate mutase from Prosthecochloris aestuarii (strain DSM 271 / SK 413).